We begin with the raw amino-acid sequence, 143 residues long: Nucleoside diphosphate kinase (143 aa).

Residues K11, F59, R87, T93, R104, and N114 each contribute to the ATP site. H117 serves as the catalytic Pros-phosphohistidine intermediate.

Belongs to the NDK family. In terms of assembly, homotetramer. Mg(2+) is required as a cofactor.

It is found in the cytoplasm. It carries out the reaction a 2'-deoxyribonucleoside 5'-diphosphate + ATP = a 2'-deoxyribonucleoside 5'-triphosphate + ADP. The catalysed reaction is a ribonucleoside 5'-diphosphate + ATP = a ribonucleoside 5'-triphosphate + ADP. Functionally, major role in the synthesis of nucleoside triphosphates other than ATP. The ATP gamma phosphate is transferred to the NDP beta phosphate via a ping-pong mechanism, using a phosphorylated active-site intermediate. This Erwinia tasmaniensis (strain DSM 17950 / CFBP 7177 / CIP 109463 / NCPPB 4357 / Et1/99) protein is Nucleoside diphosphate kinase.